The primary structure comprises 238 residues: 6-phosphogluconolactonase (238 aa).

This sequence belongs to the glucosamine/galactosamine-6-phosphate isomerase family. 6-phosphogluconolactonase subfamily.

The catalysed reaction is 6-phospho-D-glucono-1,5-lactone + H2O = 6-phospho-D-gluconate + H(+). The protein operates within carbohydrate degradation; pentose phosphate pathway; D-ribulose 5-phosphate from D-glucose 6-phosphate (oxidative stage): step 2/3. In terms of biological role, hydrolysis of 6-phosphogluconolactone to 6-phosphogluconate. This Mesorhizobium japonicum (strain LMG 29417 / CECT 9101 / MAFF 303099) (Mesorhizobium loti (strain MAFF 303099)) protein is 6-phosphogluconolactonase (pgl).